Consider the following 64-residue polypeptide: Large ribosomal subunit protein bL32 (64 aa).

The segment covering 1–16 has biased composition (basic residues); the sequence is MAVPKHRKSKAKKRSR. The segment at 1-22 is disordered; the sequence is MAVPKHRKSKAKKRSRQAANDK.

The protein belongs to the bacterial ribosomal protein bL32 family.

The chain is Large ribosomal subunit protein bL32 from Brachyspira hyodysenteriae (strain ATCC 49526 / WA1).